The primary structure comprises 331 residues: Lipoate-protein ligase LplJ (331 aa).

One can recognise a BPL/LPL catalytic domain in the interval 27-214 (DPEQQYLLFY…HIFNTNDVGN (188 aa)). ATP-binding positions include Arg-69, 74 to 77 (GAVY), and Lys-131. Lys-131 serves as a coordination point for (R)-lipoate.

This sequence belongs to the LplA family.

It is found in the cytoplasm. It carries out the reaction L-lysyl-[lipoyl-carrier protein] + (R)-lipoate + ATP = N(6)-[(R)-lipoyl]-L-lysyl-[lipoyl-carrier protein] + AMP + diphosphate + H(+). It functions in the pathway protein modification; protein lipoylation via exogenous pathway; protein N(6)-(lipoyl)lysine from lipoate: step 1/2. Its pathway is protein modification; protein lipoylation via exogenous pathway; protein N(6)-(lipoyl)lysine from lipoate: step 2/2. Functionally, catalyzes both the ATP-dependent activation of exogenously supplied lipoate to lipoyl-AMP and the transfer of the activated lipoyl onto the lipoyl domains of lipoate-dependent enzymes. Is also able to use octanoate as substrate. The protein is Lipoate-protein ligase LplJ (lplJ) of Bacillus subtilis (strain 168).